Here is a 129-residue protein sequence, read N- to C-terminus: Small ribosomal subunit protein uS9 (129 aa).

Belongs to the universal ribosomal protein uS9 family.

This Chlorobium luteolum (strain DSM 273 / BCRC 81028 / 2530) (Pelodictyon luteolum) protein is Small ribosomal subunit protein uS9.